A 57-amino-acid chain; its full sequence is Sec-independent protein translocase protein TatA (57 aa).

Residues 1–21 (MGISVWQLLIILLIVVMLFGT) traverse the membrane as a helical segment. Positions 37-57 (GFRKSVSDGETTTQAEASSRS) are disordered. The segment covering 44–57 (DGETTTQAEASSRS) has biased composition (polar residues).

The protein belongs to the TatA/E family. The Tat system comprises two distinct complexes: a TatABC complex, containing multiple copies of TatA, TatB and TatC subunits, and a separate TatA complex, containing only TatA subunits. Substrates initially bind to the TatABC complex, which probably triggers association of the separate TatA complex to form the active translocon.

It localises to the cell inner membrane. Its function is as follows. Part of the twin-arginine translocation (Tat) system that transports large folded proteins containing a characteristic twin-arginine motif in their signal peptide across membranes. TatA could form the protein-conducting channel of the Tat system. The sequence is that of Sec-independent protein translocase protein TatA from Stutzerimonas stutzeri (Pseudomonas stutzeri).